The primary structure comprises 243 residues: Thiocyanate hydrolase subunit gamma (243 aa).

Co(3+) is bound by residues Cys-128, Cys-131, Ser-132, and Cys-133. Cys-131 carries the cysteine sulfinic acid (-SO2H) modification. Cysteine sulfenic acid (-SOH) is present on Cys-133.

It belongs to the nitrile hydratase subunit alpha family. Heterododecamer consisting of 4 alpha, 4 beta, and 4 gamma subunits. The cofactor is Co(3+).

The catalysed reaction is thiocyanate + H2O + 2 H(+) = carbonyl sulfide + NH4(+). It participates in organosulfur degradation; thiocyanate degradation. Functionally, involved in the degradation of thiocyanate. This Thiobacillus thioparus protein is Thiocyanate hydrolase subunit gamma (scnC).